Reading from the N-terminus, the 98-residue chain is Peptide YY (98 aa).

Positions 1–28 are cleaved as a signal peptide; that stretch reads MVAVRRPWPVTVAMLLILLACLGALVDA. At serine 41 the chain carries Phosphoserine. Tyrosine 64 is subject to Tyrosine amide. A propeptide spanning residues 68 to 98 is cleaved from the precursor; it reads DVPAALFSKLLFTDDSDSENLPFRPEGLDQW.

Belongs to the NPY family. The peptide YY form is cleaved at Pro-30 by the prolyl endopeptidase FAP (seprase) activity (in vitro) to generate peptide YY(3-36).

The protein localises to the secreted. Functionally, this gut peptide inhibits exocrine pancreatic secretion, has a vasoconstrictory action and inhibitis jejunal and colonic mobility. This Mus musculus (Mouse) protein is Peptide YY (Pyy).